Consider the following 561-residue polypeptide: Long-chain-fatty-acid--CoA ligase (561 aa).

213 to 224 is an ATP binding site; it reads YTGGTTGVAKGA.

This sequence belongs to the ATP-dependent AMP-binding enzyme family. Mg(2+) is required as a cofactor.

The protein localises to the membrane. The catalysed reaction is a long-chain fatty acid + ATP + CoA = a long-chain fatty acyl-CoA + AMP + diphosphate. It functions in the pathway lipid metabolism; fatty acid beta-oxidation. Its function is as follows. Catalyzes the esterification, concomitant with transport, of exogenous long-chain fatty acids into metabolically active CoA thioesters for subsequent degradation or incorporation into phospholipids. The sequence is that of Long-chain-fatty-acid--CoA ligase (fadD) from Escherichia coli O6:H1 (strain CFT073 / ATCC 700928 / UPEC).